Reading from the N-terminus, the 509-residue chain is Maturase K (509 aa).

It belongs to the intron maturase 2 family. MatK subfamily.

Its subcellular location is the plastid. It is found in the chloroplast. Usually encoded in the trnK tRNA gene intron. Probably assists in splicing its own and other chloroplast group II introns. This is Maturase K from Nicotiana tomentosiformis (Tobacco).